Reading from the N-terminus, the 335-residue chain is Nuclear transcription factor Y subunit gamma (335 aa).

It belongs to the NFYC/HAP5 subunit family. Heterotrimeric transcription factor composed of three components, NF-YA, NF-YB and NF-YC. NF-YB and NF-YC must interact and dimerize for NF-YA association and DNA binding.

It is found in the nucleus. Its function is as follows. Component of the sequence-specific heterotrimeric transcription factor (NF-Y) which specifically recognizes a 5'-CCAAT-3' box motif found in the promoters of its target genes. NF-Y can function as both an activator and a repressor, depending on its interacting cofactors. This is Nuclear transcription factor Y subunit gamma (Nfyc) from Rattus norvegicus (Rat).